Consider the following 30-residue polypeptide: AEVPMPLRQLTMTLPDGREESVMERTTLVA.

This sequence belongs to the ATPase alpha/beta chains family. As to quaternary structure, V-ATPase is a heteromultimeric enzyme composed of a peripheral catalytic V1 complex (main components: subunits A, B, C, D, E, and F) attached to an integral membrane V0 proton pore complex (main component: the proteolipid protein).

The enzyme catalyses ATP + H2O + 4 H(+)(in) = ADP + phosphate + 5 H(+)(out). Its function is as follows. Catalytic subunit of the peripheral V1 complex of vacuolar ATPase. V-ATPase vacuolar ATPase is responsible for acidifying a variety of intracellular compartments in eukaryotic cells. In Equisetum arvense (Field horsetail), this protein is V-type proton ATPase catalytic subunit A isoform 2.